Here is a 37-residue protein sequence, read N- to C-terminus: Potassium channel toxin alpha-KTx 1.13 (37 aa).

Residue Q1 is modified to Pyrrolidone carboxylic acid. Intrachain disulfides connect C7-C28, C13-C33, and C17-C35. Residues 26 to 33 are interaction with Ca(2+)-activated K(+) channels; sequence GKCMNKKC.

Belongs to the short scorpion toxin superfamily. Potassium channel inhibitor family. Alpha-KTx 01 subfamily. As to expression, expressed by the venom gland.

It localises to the secreted. Potent selective inhibitor of high conductance (maxi-K), different medium and small conductance calcium-activated potassium channels (KCa1.1/KCNMA1 and others), as well as a voltage-dependent potassium channel (Kv1.3/KCNA3&gt;Kv1.2/KCNA2&gt;Kv1.6/KCNA3&gt;&gt;Shaker/Sh). It blocks channel activity by a simple bimolecular inhibition process. Functionally, has a pH-specific antimicrobial activity against bacteria (B.subtilis, E.coli and S.aureus) and the fungus C.albicans. The sequence is that of Potassium channel toxin alpha-KTx 1.13 from Leiurus hebraeus (Hebrew deathstalker scorpion).